The following is a 1720-amino-acid chain: Merozoite surface protein 1 (1720 aa).

The N-terminal stretch at Met-1–Cys-19 is a signal peptide. Positions Ala-63–Ser-112 are enriched in low complexity. The disordered stretch occupies residues Ala-63–Ala-137. Positions Arg-113–Thr-122 are enriched in polar residues. Low complexity predominate over residues Ser-123–Ala-132. Residues Ile-474–Met-519 adopt a coiled-coil conformation. 4 disordered regions span residues Ser-723 to Glu-775, Thr-908 to Ala-955, Thr-1249 to Pro-1278, and Lys-1470 to Lys-1491. Residues Glu-743–Glu-753 show a composition bias toward acidic residues. Over residues Thr-908–Asn-946 the composition is skewed to low complexity. Positions Val-1264–Pro-1278 are enriched in polar residues. Residues Ser-1475–Pro-1484 are compositionally biased toward pro residues. 2 EGF-like domains span residues His-1611–Pro-1651 and Asn-1652–Phe-1693. Intrachain disulfides connect Cys-1613/Cys-1624, Cys-1618/Cys-1634, Cys-1636/Cys-1647, Cys-1655/Cys-1668, Cys-1662/Cys-1682, and Cys-1684/Cys-1698. Ser-1699 carries GPI-anchor amidated serine lipidation. Positions Ser-1700–Ile-1720 are cleaved as a propeptide — removed in mature form.

Forms a complex composed of subunits p83, p30, p38, and p42 which remain non-covalently associated; the complex is formed at the merozoite surface prior to egress from host erythrocytes. Forms a complex composed of processed MSP1 subunits, MSP6 subunit p36 and MSP7; the complex is formed at the merozoite surface prior to egress from host erythrocytes. Within the complex, interacts (via subunit p38) with MSP6 subunit p36 and (via subunits p83, p30 and p38) with MSP7 (via subunit p22). Forms a complex composed of MSP1, MSP6, DBLMSP1 and DBLMSP2. Within the complex, interacts (via subunit p38) with DBLMSP1 and DBLMSP2. Forms a complex composed of MSP1, and rhoptry proteins RhopH3, RAP1 and CLAG9/RhopH3. Within the complex, interacts (via subunits p42 and p19) with RhopH3 (via C-terminus). Forms a complex composed of MSP1, MSP6, MSP7, MSP9 and MSP3; within the complex, MSP6 and MSP9 mediate the binding to the host erythrocyte. Interacts (via subunits p19 and p42) with MSP9; the interaction is direct; MSP1 subunits p19 or p42, and MSP9 form a co-ligand complex that interacts with host SLC4A1/Band 3 protein. May interact with PFD6. Interacts with host spectrin. In terms of assembly, interacts with host glycophorin GYPA in a sialic acid-independent manner. As to quaternary structure, interacts with host proinflammatory cytokine S100P; the interaction blocks S100P inflammatory and chemotactic activities. Interacts with host SLC4A1/Band 3 (via 5ABC region) on the host erythrocyte surface in a sialic acid-independent manner. In terms of processing, the p190 precursor is cleaved by SUB1 prior to merozoite egress into 4 subunits p83, p30, p38, and p42 which remain non-covalently associated. SUB1-mediated proteolytic cleavage occurs in an orderly manner; the first cleavage occurs at the p30/p38 site, followed by cleavage at the p83/p30 site, in the 3D7 strain a second cleavage occurs at the N-terminus of p83, the last cleavage occurs at the p38/p42 site. The order of cleavage is essential for parasite viability. SUB1-mediated processing is essential for merozoite egress. In a second processing step during erythrocyte invasion, p42 is cleaved by SUB2 into p33 and p19; the latter remains attached to the merozoite surface via its GPI-anchor and is endocytosed during the subsequent ring stage.

It is found in the cell membrane. The protein localises to the secreted. It localises to the vacuole membrane. Functionally, during the asexual blood stage, involved in merozoite egress from host erythrocytes possibly via its interaction with the host cytoskeleton protein spectrin resulting in the destabilization of the host cytoskeleton and thus leading to erythrocyte cell membrane rupture. Involved in the binding to host erythrocytes and is required for host erythrocyte invasion. By binding to host proinflammatory cytokine S100P may interfere with host immune responses. Its function is as follows. Involved in merozoite invasion of host erythrocytes. May play a role in the biogenesis and/or function of the food vacuole during the intraerythrocytic development. The polypeptide is Merozoite surface protein 1 (Plasmodium falciparum (isolate 3D7)).